Reading from the N-terminus, the 471-residue chain is Membrane-associated sulfotransferase kil1 (471 aa).

The Cytoplasmic segment spans residues 1–12; that stretch reads MSTTSMILTKKN. Residues 13-33 traverse the membrane as a helical; Signal-anchor for type II membrane protein segment; sequence IIILSIIIITIIAYQFYITSP. Residues 34–471 lie on the Lumenal side of the membrane; that stretch reads QSFPSSNTIT…LLNRDFKWQN (438 aa). N-linked (GlcNAc...) asparagine glycosylation occurs at Asn-47. Low complexity-rich tracts occupy residues 89 to 105 and 112 to 127; these read NQNE…NNNK and NNNN…NNNN. Residues 89–127 are disordered; the sequence is NQNENQNQINNEYNNNKLNDEQENNNNNNYNNNNNNNNN. 3'-phosphoadenylyl sulfate-binding positions include 167–172, Arg-252, and Ser-260; that span reads KSGTTF. Asn-324 and Asn-344 each carry an N-linked (GlcNAc...) asparagine glycan. Position 348 (Tyr-348) interacts with 3'-phosphoadenylyl sulfate.

Belongs to the sulfotransferase 1 family.

The protein resides in the membrane. In terms of biological role, sulfotransferase involved in intracellular killing of bacteria. This Dictyostelium discoideum (Social amoeba) protein is Membrane-associated sulfotransferase kil1 (kil1).